The following is a 434-amino-acid chain: Serine hydroxymethyltransferase (434 aa).

(6S)-5,6,7,8-tetrahydrofolate contacts are provided by residues L132 and 136 to 138; that span reads GHL. K241 is subject to N6-(pyridoxal phosphate)lysine.

The protein belongs to the SHMT family. In terms of assembly, homodimer. It depends on pyridoxal 5'-phosphate as a cofactor.

The protein localises to the cytoplasm. It carries out the reaction (6R)-5,10-methylene-5,6,7,8-tetrahydrofolate + glycine + H2O = (6S)-5,6,7,8-tetrahydrofolate + L-serine. The protein operates within one-carbon metabolism; tetrahydrofolate interconversion. Its pathway is amino-acid biosynthesis; glycine biosynthesis; glycine from L-serine: step 1/1. Catalyzes the reversible interconversion of serine and glycine with tetrahydrofolate (THF) serving as the one-carbon carrier. This reaction serves as the major source of one-carbon groups required for the biosynthesis of purines, thymidylate, methionine, and other important biomolecules. Also exhibits THF-independent aldolase activity toward beta-hydroxyamino acids, producing glycine and aldehydes, via a retro-aldol mechanism. This chain is Serine hydroxymethyltransferase, found in Nitrobacter hamburgensis (strain DSM 10229 / NCIMB 13809 / X14).